We begin with the raw amino-acid sequence, 132 residues long: Large ribosomal subunit protein bL12 (132 aa).

The segment covering 100-126 (ESTPKPVKEGASKEDAEAAKKELEEAG) has biased composition (basic and acidic residues). The tract at residues 100 to 132 (ESTPKPVKEGASKEDAEAAKKELEEAGAKVSIK) is disordered.

It belongs to the bacterial ribosomal protein bL12 family. As to quaternary structure, homodimer. Part of the ribosomal stalk of the 50S ribosomal subunit. Forms a multimeric L10(L12)X complex, where L10 forms an elongated spine to which 2 to 4 L12 dimers bind in a sequential fashion. Binds GTP-bound translation factors.

Forms part of the ribosomal stalk which helps the ribosome interact with GTP-bound translation factors. Is thus essential for accurate translation. The sequence is that of Large ribosomal subunit protein bL12 from Thermosynechococcus vestitus (strain NIES-2133 / IAM M-273 / BP-1).